The primary structure comprises 273 residues: NH(3)-dependent NAD(+) synthetase (273 aa).

47–54 (GISGGQDS) contributes to the ATP binding site. Asp-53 provides a ligand contact to Mg(2+). Deamido-NAD(+) is bound at residue Arg-139. ATP is bound at residue Thr-159. Glu-164 lines the Mg(2+) pocket. Residues Lys-172 and Asp-179 each contribute to the deamido-NAD(+) site. The ATP site is built by Lys-188 and Thr-210. 259-260 (HK) is a binding site for deamido-NAD(+).

The protein belongs to the NAD synthetase family. As to quaternary structure, homodimer.

The catalysed reaction is deamido-NAD(+) + NH4(+) + ATP = AMP + diphosphate + NAD(+) + H(+). It functions in the pathway cofactor biosynthesis; NAD(+) biosynthesis; NAD(+) from deamido-NAD(+) (ammonia route): step 1/1. Catalyzes the ATP-dependent amidation of deamido-NAD to form NAD. Uses ammonia as a nitrogen source. The polypeptide is NH(3)-dependent NAD(+) synthetase (Staphylococcus aureus (strain N315)).